We begin with the raw amino-acid sequence, 1462 residues long: Gag-Pol polyprotein (1462 aa).

The N-myristoyl glycine; by host moiety is linked to residue G2. Positions 7-31 (VLRGKKADELEKVRLRPNGKKRYRL) are interaction with Gp41. Residues 16–22 (LEKVRLR) carry the Nuclear export signal motif. A Nuclear localization signal motif is present at residues 26 to 32 (KKRYRLK). The segment at 191 to 228 (NCVGDHQAAMQIIREIINEEAADWDAQHPIPGPLPAGQ) is interaction with human PPIA/CYPA and NUP153. Residues 279–365 (YNPTNILDVK…GGPSQKARLM (87 aa)) form a dimerization/Multimerization of capsid protein p24 region. 2 consecutive CCHC-type zinc fingers follow at residues 389-406 (IRCWNCGKEGHSAKQCRA) and 410-427 (QGCWKCGKSGHIMANCPE). The tract at residues 433 to 509 (LDGPTGKAAP…DAPQRGDRGL (77 aa)) is disordered. The segment covering 448–465 (PSSSGADTNSTPNRSSSG) has biased composition (polar residues). 2 stretches are compositionally biased toward basic and acidic residues: residues 472–482 (AAREKAERAEG) and 497–507 (AGRDAPQRGDR). Residues 512 to 516 (PQFSL) form a dimerization of protease region. The Peptidase A2 domain occupies 532 to 601 (EVLLDTGADD…PINIFGRNIL (70 aa)). The active-site For protease activity; shared with dimeric partner is D536. 2 dimerization of protease regions span residues 560 to 566 (GIGGFIN) and 599 to 611 (NILATLGMSLNLP). The 191-residue stretch at 655-845 (GQLEEAPPTN…PFQWMGYELW (191 aa)) folds into the Reverse transcriptase domain. Residues D720, D795, and D796 each contribute to the Mg(2+) site. The tract at residues 837-845 (FQWMGYELW) is RT 'primer grip'. Residues 1007–1023 (WEQWWDNYWQVTWVPEW) carry the Tryptophan repeat motif motif. In terms of domain architecture, RNase H type-1 spans 1043-1166 (IPGTETFYTD…VDHLVSQGIR (124 aa)). Mg(2+) is bound by residues D1052, E1087, D1107, and D1158. Residues 1172–1213 (EKIEPAQEEHEKYHSNIKELTHKFGIPQLVARQIVNTCAQCQ) form an Integrase-type zinc finger. Zn(2+) is bound by residues H1181, H1185, C1209, and C1212. Residues 1223-1374 (VNAEIGVWQM…PAERLINMIT (152 aa)) form the Integrase catalytic domain. Mg(2+) contacts are provided by D1233, D1285, and E1321. A DNA-binding region (integrase-type) is located at residues 1392 to 1439 (FQVYYREGRDQLWKGPGELLWKGDGAVIVKVGADIKVVPRRKAKIIRD).

Homotrimer; further assembles as hexamers of trimers. Interacts with gp41 (via C-terminus). Interacts with host CALM1; this interaction induces a conformational change in the Matrix protein, triggering exposure of the myristate group. Interacts with host AP3D1; this interaction allows the polyprotein trafficking to multivesicular bodies during virus assembly. Part of the pre-integration complex (PIC) which is composed of viral genome, matrix protein, Vpr and integrase. As to quaternary structure, homodimer; the homodimer further multimerizes as homohexamers or homopentamers. Interacts with human PPIA/CYPA. Interacts with human NUP153. Interacts with host PDZD8; this interaction stabilizes the capsid. Interacts with monkey TRIM5; this interaction destabilizes the capsid. In terms of assembly, homodimer, whose active site consists of two apposed aspartic acid residues. Heterodimer of p66 RT and p51 RT (RT p66/p51). Heterodimerization of RT is essential for DNA polymerase activity. The overall folding of the subdomains is similar in p66 RT and p51 RT but the spatial arrangements of the subdomains are dramatically different. As to quaternary structure, homotetramer; may further associate as a homohexadecamer. Part of the pre-integration complex (PIC) which is composed of viral genome, matrix protein, Vpr and integrase. Interacts with human SMARCB1/INI1 and human PSIP1/LEDGF isoform 1. Interacts with human KPNA3; this interaction might play a role in nuclear import of the pre-integration complex. Interacts with human NUP153; this interaction might play a role in nuclear import of the pre-integration complex. The cofactor is Mg(2+). Post-translationally, specific enzymatic cleavages by the viral protease yield mature proteins. The protease is released by autocatalytic cleavage. The polyprotein is cleaved during and after budding, this process is termed maturation. Proteolytic cleavage of p66 RT removes the RNase H domain to yield the p51 RT subunit. Nucleocapsid protein p7 might be further cleaved after virus entry.

It is found in the host cell membrane. Its subcellular location is the host endosome. It localises to the host multivesicular body. The protein localises to the virion membrane. The protein resides in the host nucleus. It is found in the host cytoplasm. Its subcellular location is the virion. It carries out the reaction Endopeptidase for which the P1 residue is preferably hydrophobic.. The enzyme catalyses Endohydrolysis of RNA in RNA/DNA hybrids. Three different cleavage modes: 1. sequence-specific internal cleavage of RNA. Human immunodeficiency virus type 1 and Moloney murine leukemia virus enzymes prefer to cleave the RNA strand one nucleotide away from the RNA-DNA junction. 2. RNA 5'-end directed cleavage 13-19 nucleotides from the RNA end. 3. DNA 3'-end directed cleavage 15-20 nucleotides away from the primer terminus.. The catalysed reaction is 3'-end directed exonucleolytic cleavage of viral RNA-DNA hybrid.. It catalyses the reaction DNA(n) + a 2'-deoxyribonucleoside 5'-triphosphate = DNA(n+1) + diphosphate. Protease: The viral protease is inhibited by many synthetic protease inhibitors (PIs), such as amprenavir, atazanavir, indinavir, loprinavir, nelfinavir, ritonavir and saquinavir. Use of protease inhibitors in tritherapy regimens permit more ambitious therapeutic strategies. Reverse transcriptase/ribonuclease H: RT can be inhibited either by nucleoside RT inhibitors (NRTIs) or by non nucleoside RT inhibitors (NNRTIs). NRTIs act as chain terminators, whereas NNRTIs inhibit DNA polymerization by binding a small hydrophobic pocket near the RT active site and inducing an allosteric change in this region. Classical NRTIs are abacavir, adefovir (PMEA), didanosine (ddI), lamivudine (3TC), stavudine (d4T), tenofovir (PMPA), zalcitabine (ddC), and zidovudine (AZT). Classical NNRTIs are atevirdine (BHAP U-87201E), delavirdine, efavirenz (DMP-266), emivirine (I-EBU), and nevirapine (BI-RG-587). The tritherapies used as a basic effective treatment of AIDS associate two NRTIs and one NNRTI. In terms of biological role, mediates, with Gag polyprotein, the essential events in virion assembly, including binding the plasma membrane, making the protein-protein interactions necessary to create spherical particles, recruiting the viral Env proteins, and packaging the genomic RNA via direct interactions with the RNA packaging sequence (Psi). Gag-Pol polyprotein may regulate its own translation, by the binding genomic RNA in the 5'-UTR. At low concentration, the polyprotein would promote translation, whereas at high concentration, the polyprotein would encapsidate genomic RNA and then shut off translation. Functionally, targets the polyprotein to the plasma membrane via a multipartite membrane-binding signal, that includes its myristoylated N-terminus. Matrix protein is part of the pre-integration complex. Implicated in the release from host cell mediated by Vpu. Binds to RNA. Forms the conical core that encapsulates the genomic RNA-nucleocapsid complex in the virion. Most core are conical, with only 7% tubular. The core is constituted by capsid protein hexamer subunits. The core is disassembled soon after virion entry. Host restriction factors such as TRIM5-alpha or TRIMCyp bind retroviral capsids and cause premature capsid disassembly, leading to blocks in reverse transcription. Capsid restriction by TRIM5 is one of the factors which restricts HIV-1 to the human species. Host PIN1 apparently facilitates the virion uncoating. On the other hand, interactions with PDZD8 or CYPA stabilize the capsid. Its function is as follows. Encapsulates and protects viral dimeric unspliced genomic RNA (gRNA). Binds these RNAs through its zinc fingers. Acts as a nucleic acid chaperone which is involved in rearangement of nucleic acid secondary structure during gRNA retrotranscription. Also facilitates template switch leading to recombination. As part of the polyprotein, participates in gRNA dimerization, packaging, tRNA incorporation and virion assembly. In terms of biological role, aspartyl protease that mediates proteolytic cleavages of Gag and Gag-Pol polyproteins during or shortly after the release of the virion from the plasma membrane. Cleavages take place as an ordered, step-wise cascade to yield mature proteins. This process is called maturation. Displays maximal activity during the budding process just prior to particle release from the cell. Also cleaves Nef and Vif, probably concomitantly with viral structural proteins on maturation of virus particles. Hydrolyzes host EIF4GI and PABP1 in order to shut off the capped cellular mRNA translation. The resulting inhibition of cellular protein synthesis serves to ensure maximal viral gene expression and to evade host immune response. Functionally, multifunctional enzyme that converts the viral RNA genome into dsDNA in the cytoplasm, shortly after virus entry into the cell. This enzyme displays a DNA polymerase activity that can copy either DNA or RNA templates, and a ribonuclease H (RNase H) activity that cleaves the RNA strand of RNA-DNA heteroduplexes in a partially processive 3' to 5' endonucleasic mode. Conversion of viral genomic RNA into dsDNA requires many steps. A tRNA(3)-Lys binds to the primer-binding site (PBS) situated at the 5'-end of the viral RNA. RT uses the 3' end of the tRNA primer to perform a short round of RNA-dependent minus-strand DNA synthesis. The reading proceeds through the U5 region and ends after the repeated (R) region which is present at both ends of viral RNA. The portion of the RNA-DNA heteroduplex is digested by the RNase H, resulting in a ssDNA product attached to the tRNA primer. This ssDNA/tRNA hybridizes with the identical R region situated at the 3' end of viral RNA. This template exchange, known as minus-strand DNA strong stop transfer, can be either intra- or intermolecular. RT uses the 3' end of this newly synthesized short ssDNA to perform the RNA-dependent minus-strand DNA synthesis of the whole template. RNase H digests the RNA template except for two polypurine tracts (PPTs) situated at the 5'-end and near the center of the genome. It is not clear if both polymerase and RNase H activities are simultaneous. RNase H probably can proceed both in a polymerase-dependent (RNA cut into small fragments by the same RT performing DNA synthesis) and a polymerase-independent mode (cleavage of remaining RNA fragments by free RTs). Secondly, RT performs DNA-directed plus-strand DNA synthesis using the PPTs that have not been removed by RNase H as primers. PPTs and tRNA primers are then removed by RNase H. The 3' and 5' ssDNA PBS regions hybridize to form a circular dsDNA intermediate. Strand displacement synthesis by RT to the PBS and PPT ends produces a blunt ended, linear dsDNA copy of the viral genome that includes long terminal repeats (LTRs) at both ends. Catalyzes viral DNA integration into the host chromosome, by performing a series of DNA cutting and joining reactions. This enzyme activity takes place after virion entry into a cell and reverse transcription of the RNA genome in dsDNA. The first step in the integration process is 3' processing. This step requires a complex comprising the viral genome, matrix protein, Vpr and integrase. This complex is called the pre-integration complex (PIC). The integrase protein removes 2 nucleotides from each 3' end of the viral DNA, leaving recessed CA OH's at the 3' ends. In the second step, the PIC enters cell nucleus. This process is mediated through integrase and Vpr proteins, and allows the virus to infect a non dividing cell. This ability to enter the nucleus is specific of lentiviruses, other retroviruses cannot and rely on cell division to access cell chromosomes. In the third step, termed strand transfer, the integrase protein joins the previously processed 3' ends to the 5' ends of strands of target cellular DNA at the site of integration. The 5'-ends are produced by integrase-catalyzed staggered cuts, 5 bp apart. A Y-shaped, gapped, recombination intermediate results, with the 5'-ends of the viral DNA strands and the 3' ends of target DNA strands remaining unjoined, flanking a gap of 5 bp. The last step is viral DNA integration into host chromosome. This involves host DNA repair synthesis in which the 5 bp gaps between the unjoined strands are filled in and then ligated. Since this process occurs at both cuts flanking the HIV genome, a 5 bp duplication of host DNA is produced at the ends of HIV-1 integration. Alternatively, Integrase may catalyze the excision of viral DNA just after strand transfer, this is termed disintegration. The sequence is that of Gag-Pol polyprotein (gag-pol) from Human immunodeficiency virus type 2 subtype A (isolate D194) (HIV-2).